We begin with the raw amino-acid sequence, 573 residues long: Proline--tRNA ligase (573 aa).

This sequence belongs to the class-II aminoacyl-tRNA synthetase family. ProS type 1 subfamily. In terms of assembly, homodimer.

It localises to the cytoplasm. It carries out the reaction tRNA(Pro) + L-proline + ATP = L-prolyl-tRNA(Pro) + AMP + diphosphate. Its function is as follows. Catalyzes the attachment of proline to tRNA(Pro) in a two-step reaction: proline is first activated by ATP to form Pro-AMP and then transferred to the acceptor end of tRNA(Pro). As ProRS can inadvertently accommodate and process non-cognate amino acids such as alanine and cysteine, to avoid such errors it has two additional distinct editing activities against alanine. One activity is designated as 'pretransfer' editing and involves the tRNA(Pro)-independent hydrolysis of activated Ala-AMP. The other activity is designated 'posttransfer' editing and involves deacylation of mischarged Ala-tRNA(Pro). The misacylated Cys-tRNA(Pro) is not edited by ProRS. The sequence is that of Proline--tRNA ligase from Chromohalobacter salexigens (strain ATCC BAA-138 / DSM 3043 / CIP 106854 / NCIMB 13768 / 1H11).